The primary structure comprises 246 residues: 1-(5-phosphoribosyl)-5-[(5-phosphoribosylamino)methylideneamino] imidazole-4-carboxamide isomerase (246 aa).

Aspartate 8 acts as the Proton acceptor in catalysis. Catalysis depends on aspartate 131, which acts as the Proton donor.

This sequence belongs to the HisA/HisF family.

It localises to the cytoplasm. The catalysed reaction is 1-(5-phospho-beta-D-ribosyl)-5-[(5-phospho-beta-D-ribosylamino)methylideneamino]imidazole-4-carboxamide = 5-[(5-phospho-1-deoxy-D-ribulos-1-ylimino)methylamino]-1-(5-phospho-beta-D-ribosyl)imidazole-4-carboxamide. It functions in the pathway amino-acid biosynthesis; L-histidine biosynthesis; L-histidine from 5-phospho-alpha-D-ribose 1-diphosphate: step 4/9. This Delftia acidovorans (strain DSM 14801 / SPH-1) protein is 1-(5-phosphoribosyl)-5-[(5-phosphoribosylamino)methylideneamino] imidazole-4-carboxamide isomerase.